Consider the following 1720-residue polypeptide: 182 kDa tankyrase-1-binding protein (1720 aa).

Residues 1-137 are disordered; sequence MKGSTLREGT…PPLTPPARCA (137 aa). Ser14 is modified (phosphoserine). Basic and acidic residues predominate over residues 117–127; that stretch reads SGKEDAGKEDL. Thr131 carries the post-translational modification Phosphothreonine. A phosphoserine mark is found at Ser178 and Ser220. Disordered stretches follow at residues 185-472 and 485-595; these read SRLT…ESNW and RPSG…EDQE. Positions 209–1563 are acidic; sequence EEDSKSPAKG…TEILDSAMYR (1355 aa). The segment covering 232-243 has biased composition (basic and acidic residues); that stretch reads QEEHSKTPEERN. A Phosphothreonine modification is found at Thr238. The span at 266–287 shows a compositional bias: polar residues; sequence VSKTWVTSSADPVSEHGGSTSA. Residues Ser286 and Ser300 each carry the phosphoserine modification. Low complexity predominate over residues 296–316; the sequence is PASESPRLSSRPSSPCHSQLS. Residues 317–327 show a composition bias toward polar residues; it reads ETQSPAASEAS. Ser429 and Ser437 each carry phosphoserine. Residues 449-459 show a composition bias toward polar residues; that stretch reads TLPQGQGSQSA. A phosphoserine mark is found at Ser496 and Ser500. The segment covering 502 to 518 has biased composition (low complexity); sequence ITEASEAAEAAEADSWA. Phosphothreonine is present on residues Thr503 and Thr533. Phosphoserine is present on residues Ser539, Ser568, Ser602, Ser673, Ser692, and Ser713. Disordered stretches follow at residues 659 to 720, 734 to 924, and 955 to 1081; these read TTLP…CSEG, GVAT…EFEK, and SGGG…GWAG. Positions 742–758 are enriched in low complexity; that stretch reads SSFGSSSWSQDTSQNYS. Phosphoserine occurs at positions 763, 796, 807, 845, 866, 871, 876, 887, 912, 976, 980, 1006, 1017, and 1022. Positions 840–866 are enriched in basic and acidic residues; sequence FGKRESQDPHSIHDKELQDQEFGKRDS. Residues 991-1014 show a composition bias toward basic and acidic residues; that stretch reads FEKKTPVGEDRFCEASRDVGHLEE. Positions 1027–1039 are enriched in basic and acidic residues; the sequence is HSRDGAARPKDEG. Residues Ser1047, Ser1063, Ser1084, Ser1096, Ser1126, Ser1131, Ser1171, Ser1212, Ser1241, and Ser1246 each carry the phosphoserine modification. The disordered stretch occupies residues 1128-1153; it reads AGLSPSRKSGGGHFVPPGETKAGAVD. The tract at residues 1198–1255 is disordered; the sequence is LARRLGTGESEEPRSLGVGEKDWTSSVEARNRDLPGQAEVGRHSQARESGVGEPDWSG. Over residues 1208 to 1230 the composition is skewed to basic and acidic residues; it reads EEPRSLGVGEKDWTSSVEARNRD. Residue Thr1275 is modified to Phosphothreonine. Phosphoserine occurs at positions 1290, 1321, 1324, 1373, and 1375. A disordered region spans residues 1358-1546; sequence GRVGPDLELD…RGLLPSCPSE (189 aa). Residues 1402 to 1411 are compositionally biased toward polar residues; the sequence is EDSSSPSFET. Ser1425, Ser1429, Ser1437, Ser1440, Ser1442, Ser1463, and Ser1466 each carry phosphoserine. Residues 1428–1457 are compositionally biased toward polar residues; that stretch reads ASPSSCLTRSPPSGSQSLLEGIMTASSSKG. Residues 1440-1532 form a tankyrase-binding region; the sequence is SGSQSLLEGI…QNEQASAPPP (93 aa). Low complexity predominate over residues 1477–1489; sequence LAAGAGQGEPQEP. Residue Ser1496 is modified to Phosphoserine. Residues 1515–1527 are compositionally biased toward polar residues; it reads WSLTGAARQNEQA. Residue Ser1549 is modified to Phosphoserine. Thr1554 is modified (phosphothreonine). The interval 1567-1720 is disordered; that stretch reads NLGRKRGHRA…QALKLKKKKI (154 aa). The segment covering 1568–1577 has biased composition (basic residues); that stretch reads LGRKRGHRAP. The segment covering 1593–1606 has biased composition (basic and acidic residues); sequence SDTRLFQDSTEPRA. Phosphoserine occurs at positions 1611, 1612, and 1622. The Nuclear localization signal motif lies at 1620 to 1626; that stretch reads PQSRRTR. Lys1635 is subject to N6-methyllysine. Phosphoserine is present on residues Ser1643 and Ser1657. Basic and acidic residues predominate over residues 1656-1670; the sequence is RSAEEGEVTESKSSQ. Residues 1671 to 1690 show a composition bias toward low complexity; that stretch reads KESSVQRSKSCKVPGLGKPL. At Ser1706 the chain carries Phosphoserine. The Nuclear localization signal motif lies at 1714 to 1719; it reads KLKKKK.

As to quaternary structure, binds to the ANK repeat domain of TNKS1 and TNKS2. Post-translationally, ADP-ribosylated by TNKS1.

Its subcellular location is the nucleus. The protein resides in the cytoplasm. It localises to the cytoskeleton. It is found in the chromosome. This Mus musculus (Mouse) protein is 182 kDa tankyrase-1-binding protein (Tnks1bp1).